A 299-amino-acid chain; its full sequence is GTP cyclohydrolase FolE2 (299 aa).

This sequence belongs to the GTP cyclohydrolase IV family.

The catalysed reaction is GTP + H2O = 7,8-dihydroneopterin 3'-triphosphate + formate + H(+). The protein operates within cofactor biosynthesis; 7,8-dihydroneopterin triphosphate biosynthesis; 7,8-dihydroneopterin triphosphate from GTP: step 1/1. Converts GTP to 7,8-dihydroneopterin triphosphate. This chain is GTP cyclohydrolase FolE2, found in Citrobacter koseri (strain ATCC BAA-895 / CDC 4225-83 / SGSC4696).